The primary structure comprises 466 residues: Muscarinic acetylcholine receptor M2 (466 aa).

Residues 1–22 (MNNSTNSSNSGLALTSPYKTFE) lie on the Extracellular side of the membrane. Residues asparagine 2, asparagine 3, and asparagine 6 are each glycosylated (N-linked (GlcNAc...) asparagine). The helical transmembrane segment at 23 to 45 (VVFIVLVAGSLSLVTIIGNILVM) threads the bilayer. At 46–59 (VSIKVNRHLQTVNN) the chain is on the cytoplasmic side. Residues 60 to 80 (YFLFSLACADLIIGVFSMNLY) form a helical membrane-spanning segment. At 81 to 97 (TLYTVIGYWPLGPVVCD) the chain is on the extracellular side. An intrachain disulfide couples cysteine 96 to cysteine 176. A helical transmembrane segment spans residues 98-119 (LWLALDYVVSNASVMNLLIISF). The short motif at 120 to 122 (DRY) is the Important for signaling element. The Cytoplasmic portion of the chain corresponds to 120 to 139 (DRYFCVTKPLTYPVKRTTKM). The helical transmembrane segment at 140–162 (AGMMIAAAWVLSFILWAPAILFW) threads the bilayer. Topologically, residues 163-184 (QFIVGVRTVEDGECYIQFFSNA) are extracellular. The chain crosses the membrane as a helical span at residues 185–209 (AVTFGTAIAAFYLPVIIMTVLYWHI). Topologically, residues 210–387 (SRASKSRIKK…PPSREKKVTR (178 aa)) are cytoplasmic. The disordered stretch occupies residues 218 to 320 (KKDKKEPVAN…SLGHSKDENS (103 aa)). Serine 232 is subject to Phosphoserine. A compositionally biased stretch (basic and acidic residues) spans 254 to 270 (ALEHNKIQNGKAPRDAV). Polar residues-rich tracts occupy residues 284-293 (NDSTSVSAVA) and 304-313 (DENTVSTSLG). The helical transmembrane segment at 388-410 (TILAILLAFIITWAPYNVMVLIN) threads the bilayer. At 411-418 (TFCAPCIP) the chain is on the extracellular side. A disulfide bridge connects residues cysteine 413 and cysteine 416. A helical membrane pass occupies residues 419–442 (NTVWTIGYWLCYINSTINPACYAL). The Important for signaling motif lies at 436 to 440 (NPACY). The Cytoplasmic segment spans residues 443-466 (CNATFKKTFKHLLMCHYKNIGATR). Residues threonine 446, threonine 450, and threonine 465 each carry the phosphothreonine modification.

The protein belongs to the G-protein coupled receptor 1 family. Muscarinic acetylcholine receptor subfamily. CHRM2 sub-subfamily. As to quaternary structure, interacts with ARRB1 and ARRB2. Interacts with RACK1; the interaction regulates CHRM2 internalization. Phosphorylated in response to agonist treatment.

It is found in the cell membrane. The protein localises to the postsynaptic cell membrane. Its function is as follows. The muscarinic acetylcholine receptor mediates various cellular responses, including inhibition of adenylate cyclase, breakdown of phosphoinositides and modulation of potassium channels through the action of G proteins. Primary transducing effect is adenylate cyclase inhibition. The polypeptide is Muscarinic acetylcholine receptor M2 (CHRM2) (Sus scrofa (Pig)).